Reading from the N-terminus, the 300-residue chain is 2-oxoglutarate-dependent dioxygenase DAO (300 aa).

In terms of domain architecture, Fe2OG dioxygenase spans 149 to 252 (WPCQFRMNRY…VSIAMFLLAP (104 aa)). Fe cation is bound by residues H173, D175, and H232. R242 is a 2-oxoglutarate binding site.

It belongs to the iron/ascorbate-dependent oxidoreductase family. The cofactor is Fe(2+).

Functionally, 2-oxoglutarate-dependent dioxygenase essential for auxin catabolism and maintenance of auxin homeostasis in reproductive organs. Catalyzes the irreversible oxidation of indole-3-acetic acid (IAA) to the biologically inactive 2-oxoindole-3-acetic acid (OxIAA). This Oryza sativa subsp. indica (Rice) protein is 2-oxoglutarate-dependent dioxygenase DAO (DAO).